The chain runs to 1051 residues: Exportin-T (1051 aa).

Belongs to the exportin family.

Its subcellular location is the nucleus. It is found in the cytoplasm. Its function is as follows. tRNA nucleus export receptor which facilitates tRNA translocation across the nuclear pore complex. Involved in pre-tRNA splicing, probably by affecting the interaction of pre-tRNA with splicing endonuclease. This is Exportin-T (LOS1) from Eremothecium gossypii (strain ATCC 10895 / CBS 109.51 / FGSC 9923 / NRRL Y-1056) (Yeast).